A 732-amino-acid polypeptide reads, in one-letter code: 1,4-alpha-glucan branching enzyme GlgB (732 aa).

Aspartate 412 acts as the Nucleophile in catalysis. Residue glutamate 465 is the Proton donor of the active site.

It belongs to the glycosyl hydrolase 13 family. GlgB subfamily. As to quaternary structure, monomer.

It carries out the reaction Transfers a segment of a (1-&gt;4)-alpha-D-glucan chain to a primary hydroxy group in a similar glucan chain.. It participates in glycan biosynthesis; glycogen biosynthesis. Its function is as follows. Catalyzes the formation of the alpha-1,6-glucosidic linkages in glycogen by scission of a 1,4-alpha-linked oligosaccharide from growing alpha-1,4-glucan chains and the subsequent attachment of the oligosaccharide to the alpha-1,6 position. In Pseudomonas aeruginosa (strain ATCC 15692 / DSM 22644 / CIP 104116 / JCM 14847 / LMG 12228 / 1C / PRS 101 / PAO1), this protein is 1,4-alpha-glucan branching enzyme GlgB.